We begin with the raw amino-acid sequence, 356 residues long: MIDKLQAIEDRYVDLSQKISDPNIISNVAEWRKYVKEHAAIEDIVLKYREYKKVLEDIEATKELLSSNDEELKEMAEEELSQLEEKKEKLLEEIKILLIPKDPNDEKNVIMEIRAGAGGEEAALFAHDLFRMYSMYAEKKGWKVEIMSSNETDIGGFKEVILNISGKGSYSRLKYESGVHRVQRVPTTEAGGRIHTSTATVAVLPEVEEVDVEINPNDIKIDVFRSGGHGGQSVNTTDSAVRVTHIPTGIVVTCQDERSQIQNRERALKILRAKLYEMALQEQQREIAETRKSQVGTGERSERIRTYNFPQGRVTDHRIGLTLYRLQEVLDGDLDEIIDALILNDQAEKLKNMNLN.

The residue at position 232 (glutamine 232) is an N5-methylglutamine.

This sequence belongs to the prokaryotic/mitochondrial release factor family. Methylated by PrmC. Methylation increases the termination efficiency of RF1.

It localises to the cytoplasm. In terms of biological role, peptide chain release factor 1 directs the termination of translation in response to the peptide chain termination codons UAG and UAA. The chain is Peptide chain release factor 1 from Thermoanaerobacter pseudethanolicus (strain ATCC 33223 / 39E) (Clostridium thermohydrosulfuricum).